Consider the following 331-residue polypeptide: UDP-galactose/UDP-glucose transporter 3 (331 aa).

8 helical membrane passes run 11-31, 49-69, 80-100, 112-132, 135-155, 170-190, 206-226, and 245-265; these read VLLL…QGIL, HLAF…YIMI, APWW…AMGI, VLAK…VYGI, TLPE…FALL, APLG…TNAT, IMLG…FGLP, and WDIL…FLTI. A Di-lysine motif motif is present at residues 327–331; the sequence is KKKKA.

The protein belongs to the nucleotide-sugar transporter family. UDP-galactose:UMP antiporter (TC 2.A.7.11) subfamily. Mostly expressed in flowers, and, to a lower extent, in roots, stems and leaves.

The protein resides in the endoplasmic reticulum membrane. Its subcellular location is the golgi apparatus membrane. In terms of biological role, essential sugar transporter required for the transport of UDP-glucose from the cytoplasm into the Golgi and the endoplasmic reticulum. Essential for pollen development and involved in embryo sac progress. In Arabidopsis thaliana (Mouse-ear cress), this protein is UDP-galactose/UDP-glucose transporter 3.